Reading from the N-terminus, the 570-residue chain is MSRKLSREAYTDLFGATEGDRLRLGDTNLLAKIEKDHGTYGDEAVFGGGKTMRDGMGMQSGTTQAEGALDWVFSNAVIIDPILGIQKGDIGVRDGKIAGIGKAGNPDTMDGVDDELVIGPSTDTAPADGLIATPGGLDIHIHFNSKELFEHALASGVTTMFGGGYGGGATTCTTGPENIKRFLQAAEEYPVNVGFYAKGNSSGPDPIIEQIEAGACGLKLHEDWGSTPDVIDTALTVADEEDVQVCIHTDTLNESGFLEDTFEAIDGRTIHTFHIEGAGGGHAPDVLELIGYDHMLPSSTNPSMPYTVNTFDEHLDMVMVCHHLNPDVPEDVAFAESRIRSETIAAEDVLHDMGAISMMTSDSQAMGRMAEVITRTWQTAHKMKSQRGALPADRGTDADNARIKRYVAKYTINPAKVAGINEYVGSLEPGKMADIVLWEPEFYGIKPKYVIKGGFPVHSEMGEANGSLMTCEPVMQRSRMGAVGKAKHAISTTFVSKAAYENDIGDQIGLESRVRPVEGTRDVGKNDMRHNEYAPENIDIDPQTFEVAVDGEHVTCEPAEELPLAKRYSL.

In terms of domain architecture, Urease spans 135-570; sequence GGLDIHIHFN…ELPLAKRYSL (436 aa). Ni(2+)-binding residues include H140, H142, and K219. At K219 the chain carries N6-carboxylysine. Residue H221 participates in substrate binding. Ni(2+) contacts are provided by H248 and H274. Catalysis depends on H322, which acts as the Proton donor. D362 is a binding site for Ni(2+).

Belongs to the metallo-dependent hydrolases superfamily. Urease alpha subunit family. Heterotrimer of UreA (gamma), UreB (beta) and UreC (alpha) subunits. Three heterotrimers associate to form the active enzyme. Ni cation serves as cofactor. Post-translationally, carboxylation allows a single lysine to coordinate two nickel ions.

Its subcellular location is the cytoplasm. It catalyses the reaction urea + 2 H2O + H(+) = hydrogencarbonate + 2 NH4(+). It participates in nitrogen metabolism; urea degradation; CO(2) and NH(3) from urea (urease route): step 1/1. The chain is Urease subunit alpha from Haloquadratum walsbyi (strain DSM 16790 / HBSQ001).